The sequence spans 204 residues: uncharacterized protein (204 aa).

The tract at residues 77–111 (APHGSRIPGRCRRSPRCSRRPGGSRLRGGTWTPRL) is disordered. Residues 85–95 (GRCRRSPRCSR) show a composition bias toward basic residues. Residues 96–105 (RPGGSRLRGG) are compositionally biased toward low complexity.

This is an uncharacterized protein from Homo sapiens (Human).